A 154-amino-acid chain; its full sequence is Xanthine-guanine phosphoribosyltransferase (154 aa).

5-phospho-alpha-D-ribose 1-diphosphate-binding positions include Arg37–Gly38, Arg69, and Glu88–Thr96. Arg69 serves as a coordination point for GMP. Residue Asp89 participates in Mg(2+) binding. 2 residues coordinate guanine: Asp92 and Ile135. Residues Asp92 and Ile135 each contribute to the xanthine site. Residues Asp92 to Thr96 and Trp134 to Ile135 each bind GMP.

Belongs to the purine/pyrimidine phosphoribosyltransferase family. XGPT subfamily. Homotetramer. It depends on Mg(2+) as a cofactor.

The protein localises to the cell inner membrane. The catalysed reaction is GMP + diphosphate = guanine + 5-phospho-alpha-D-ribose 1-diphosphate. It carries out the reaction XMP + diphosphate = xanthine + 5-phospho-alpha-D-ribose 1-diphosphate. The enzyme catalyses IMP + diphosphate = hypoxanthine + 5-phospho-alpha-D-ribose 1-diphosphate. The protein operates within purine metabolism; GMP biosynthesis via salvage pathway; GMP from guanine: step 1/1. Its pathway is purine metabolism; XMP biosynthesis via salvage pathway; XMP from xanthine: step 1/1. In terms of biological role, purine salvage pathway enzyme that catalyzes the transfer of the ribosyl-5-phosphate group from 5-phospho-alpha-D-ribose 1-diphosphate (PRPP) to the N9 position of the 6-oxopurines guanine and xanthine to form the corresponding ribonucleotides GMP (guanosine 5'-monophosphate) and XMP (xanthosine 5'-monophosphate), with the release of PPi. To a lesser extent, also acts on hypoxanthine. The sequence is that of Xanthine-guanine phosphoribosyltransferase from Vibrio campbellii (strain ATCC BAA-1116).